Here is a 126-residue protein sequence, read N- to C-terminus: Cytochrome c2 (126 aa).

Residues Cys17, Cys20, His21, and Met101 each contribute to the heme c site.

This sequence belongs to the cytochrome c family. In terms of processing, binds 1 heme c group covalently per subunit.

It localises to the periplasm. In terms of biological role, cytochrome c2 is found mainly in purple, non-sulfur, photosynthetic bacteria where it functions as the electron donor to the oxidized bacteriochlorophyll in the photophosphorylation pathway. However, it may also have a role in the respiratory chain and is found in some non-photosynthetic bacteria. The chain is Cytochrome c2 from Rhodovulum adriaticum (Rhodopseudomonas adriatica).